We begin with the raw amino-acid sequence, 293 residues long: Bifunctional protein FolD (293 aa).

NADP(+)-binding positions include 165–167 (GRG), Thr-192, and Val-233.

The protein belongs to the tetrahydrofolate dehydrogenase/cyclohydrolase family. Homodimer.

The enzyme catalyses (6R)-5,10-methylene-5,6,7,8-tetrahydrofolate + NADP(+) = (6R)-5,10-methenyltetrahydrofolate + NADPH. The catalysed reaction is (6R)-5,10-methenyltetrahydrofolate + H2O = (6R)-10-formyltetrahydrofolate + H(+). Its pathway is one-carbon metabolism; tetrahydrofolate interconversion. In terms of biological role, catalyzes the oxidation of 5,10-methylenetetrahydrofolate to 5,10-methenyltetrahydrofolate and then the hydrolysis of 5,10-methenyltetrahydrofolate to 10-formyltetrahydrofolate. This Streptomyces griseus subsp. griseus (strain JCM 4626 / CBS 651.72 / NBRC 13350 / KCC S-0626 / ISP 5235) protein is Bifunctional protein FolD.